Consider the following 702-residue polypeptide: Mesothelin-like protein (702 aa).

The signal sequence occupies residues 1 to 35 (MAAAVTIPGPRIGALQSSGLTLLLSLAAHCSGPQA). Residues 36–638 (KVLSPGGLDA…AQASTSGSLW (603 aa)) lie on the Extracellular side of the membrane. N-linked (GlcNAc...) asparagine glycans are attached at residues Asn-122, Asn-307, and Asn-424. The disordered stretch occupies residues 588–611 (QLGLDASPTSPTGPAHGTRGPPST). A helical membrane pass occupies residues 639–668 (APLGYLPLAMALPCSLLCLLHWGTCILVSV). The Cytoplasmic portion of the chain corresponds to 669–702 (DSVASGWLGSQGSGAGKTEVLDSAGRPLGLTGQL).

The protein belongs to the mesothelin family.

The protein resides in the membrane. Its function is as follows. May play a role in cellular adhesion. This chain is Mesothelin-like protein (MSLNL), found in Homo sapiens (Human).